A 190-amino-acid polypeptide reads, in one-letter code: Elongation factor P (190 aa).

The protein belongs to the elongation factor P family.

The protein resides in the cytoplasm. The protein operates within protein biosynthesis; polypeptide chain elongation. Its function is as follows. Involved in peptide bond synthesis. Stimulates efficient translation and peptide-bond synthesis on native or reconstituted 70S ribosomes in vitro. Probably functions indirectly by altering the affinity of the ribosome for aminoacyl-tRNA, thus increasing their reactivity as acceptors for peptidyl transferase. In Mycoplasma pneumoniae (strain ATCC 29342 / M129 / Subtype 1) (Mycoplasmoides pneumoniae), this protein is Elongation factor P (efp).